Reading from the N-terminus, the 382-residue chain is UDP-N-acetylglucosamine--N-acetylmuramyl-(pentapeptide) pyrophosphoryl-undecaprenol N-acetylglucosamine transferase (382 aa).

UDP-N-acetyl-alpha-D-glucosamine is bound by residues 11 to 13 (TGG), Asn117, Arg160, Ser209, and Gln311.

The protein belongs to the glycosyltransferase 28 family. MurG subfamily.

The protein resides in the cell inner membrane. The enzyme catalyses di-trans,octa-cis-undecaprenyl diphospho-N-acetyl-alpha-D-muramoyl-L-alanyl-D-glutamyl-meso-2,6-diaminopimeloyl-D-alanyl-D-alanine + UDP-N-acetyl-alpha-D-glucosamine = di-trans,octa-cis-undecaprenyl diphospho-[N-acetyl-alpha-D-glucosaminyl-(1-&gt;4)]-N-acetyl-alpha-D-muramoyl-L-alanyl-D-glutamyl-meso-2,6-diaminopimeloyl-D-alanyl-D-alanine + UDP + H(+). It functions in the pathway cell wall biogenesis; peptidoglycan biosynthesis. In terms of biological role, cell wall formation. Catalyzes the transfer of a GlcNAc subunit on undecaprenyl-pyrophosphoryl-MurNAc-pentapeptide (lipid intermediate I) to form undecaprenyl-pyrophosphoryl-MurNAc-(pentapeptide)GlcNAc (lipid intermediate II). This Rickettsia akari (strain Hartford) protein is UDP-N-acetylglucosamine--N-acetylmuramyl-(pentapeptide) pyrophosphoryl-undecaprenol N-acetylglucosamine transferase.